Reading from the N-terminus, the 156-residue chain is Small ribosomal subunit protein bS16 (156 aa).

The segment at Glu114–Lys156 is disordered. The span at Ala130–Asp139 shows a compositional bias: basic and acidic residues. Residues Asp143–Lys156 are compositionally biased toward low complexity.

Belongs to the bacterial ribosomal protein bS16 family.

The polypeptide is Small ribosomal subunit protein bS16 (Rhodococcus erythropolis (strain PR4 / NBRC 100887)).